Reading from the N-terminus, the 64-residue chain is PYLa/PGLa A (64 aa).

The signal sequence occupies residues 1–20; that stretch reads MYKQIFLCLIIAALCATIMA. A propeptide spanning residues 21 to 35 is cleaved from the precursor; the sequence is EASAFADADEDDDKR. Leu-59 bears the Leucine amide mark. A propeptide spanning residues 60-64 is cleaved from the precursor; the sequence is GRRDS.

The protein belongs to the gastrin/cholecystokinin family. Magainin subfamily. As to expression, expressed by the skin glands. Synthesized in the stomach and stored in a novel granular multinucleated cell in the gastric mucosa. Stored as active, processed peptides in large granules within the granular gland secretions of the skin.

The protein localises to the secreted. In terms of biological role, PGLa and PGLa-H display a broad-spectrum of antibacterial activity against a range of Gram-positive and Gram-negative bacteria. PGLa also displays antifungal activity against C.albicans ATCC 14053. PGLa-H shows moderate antibacterial activity against the multidrug-resistant methicillin-resistant S.aureus (MRSA) but exhibits very little hemolytic activity. The sequence is that of PYLa/PGLa A (pgla-a) from Xenopus laevis (African clawed frog).